The following is a 269-amino-acid chain: Eukaryotic translation initiation factor 3 subunit G-1 (269 aa).

An RRM domain is found at 188-266 (AAIRISNLSE…LILSVEWSKP (79 aa)).

This sequence belongs to the eIF-3 subunit G family. Component of the eukaryotic translation initiation factor 3 (eIF-3) complex. The eIF-3 complex interacts with pix.

The protein localises to the cytoplasm. In terms of biological role, RNA-binding component of the eukaryotic translation initiation factor 3 (eIF-3) complex, which is involved in protein synthesis of a specialized repertoire of mRNAs and, together with other initiation factors, stimulates binding of mRNA and methionyl-tRNAi to the 40S ribosome. The eIF-3 complex specifically targets and initiates translation of a subset of mRNAs involved in cell proliferation. This subunit can bind 18S rRNA. The sequence is that of Eukaryotic translation initiation factor 3 subunit G-1 from Drosophila mojavensis (Fruit fly).